The chain runs to 214 residues: Adenylate kinase (214 aa).

Residue 10–15 (GAGKGT) participates in ATP binding. The NMP stretch occupies residues 30–59 (STGDMFRAAIKEGTELGKQAKALMDEGKLV). Residues T31, R36, 57–59 (KLV), 85–88 (GFPR), and Q92 each bind AMP. An LID region spans residues 122–159 (GRRVHQPSGRTYHVVYNPPKVEGKDDVTGEDLIIRQDD). ATP-binding positions include R123 and 132–133 (TY). R156 and R167 together coordinate AMP. ATP is bound at residue K200.

Belongs to the adenylate kinase family. As to quaternary structure, monomer.

It is found in the cytoplasm. The enzyme catalyses AMP + ATP = 2 ADP. Its pathway is purine metabolism; AMP biosynthesis via salvage pathway; AMP from ADP: step 1/1. Functionally, catalyzes the reversible transfer of the terminal phosphate group between ATP and AMP. Plays an important role in cellular energy homeostasis and in adenine nucleotide metabolism. In Actinobacillus pleuropneumoniae serotype 5b (strain L20), this protein is Adenylate kinase.